A 3420-amino-acid polypeptide reads, in one-letter code: Adhesin BmaC autotransporter (3420 aa).

The signal sequence occupies residues 1–72 (MPNLANQDFT…SLVMAGTAAA (72 aa)). Residues 3138–3420 (GPSGNNGIWA…AGSVGLRVRW (283 aa)) enclose the Autotransporter domain.

The protein resides in the cell surface. It is found in the cell outer membrane. Functionally, fibronectin-binding protein, which is involved in adhesion to host cells and in the infective process. Mediates the binding of B.suis to the extracellular matrix and to non-phagocytic cells via cell-associated fibronectin. In Brucella suis biovar 1 (strain 1330), this protein is Adhesin BmaC autotransporter.